Consider the following 1356-residue polypeptide: DNA-directed RNA polymerase subunit beta (1356 aa).

This sequence belongs to the RNA polymerase beta chain family. The RNAP catalytic core consists of 2 alpha, 1 beta, 1 beta' and 1 omega subunit. When a sigma factor is associated with the core the holoenzyme is formed, which can initiate transcription.

The catalysed reaction is RNA(n) + a ribonucleoside 5'-triphosphate = RNA(n+1) + diphosphate. Its function is as follows. DNA-dependent RNA polymerase catalyzes the transcription of DNA into RNA using the four ribonucleoside triphosphates as substrates. The polypeptide is DNA-directed RNA polymerase subunit beta (Caulobacter vibrioides (strain ATCC 19089 / CIP 103742 / CB 15) (Caulobacter crescentus)).